The following is a 198-amino-acid chain: Recombination protein RecR (198 aa).

Residues cysteine 58–cysteine 73 form a C4-type zinc finger. A Toprim domain is found at serine 81–proline 175.

The protein belongs to the RecR family.

Its function is as follows. May play a role in DNA repair. It seems to be involved in an RecBC-independent recombinational process of DNA repair. It may act with RecF and RecO. In Clostridium novyi (strain NT), this protein is Recombination protein RecR.